A 61-amino-acid polypeptide reads, in one-letter code: MMNRLLVFLMLGAFMLVVSANDAYGGDESLGKRKSCCPCWLGGNCFWGQNCYPQGCSGPKV.

An N-terminal signal peptide occupies residues 1–20; it reads MMNRLLVFLMLGAFMLVVSA. The propeptide occupies 21–31; sequence NDAYGGDESLG. 3 cysteine pairs are disulfide-bonded: Cys-36–Cys-51, Cys-37–Cys-45, and Cys-39–Cys-56.

This sequence belongs to the sea anemone short toxin (type III) family.

Its subcellular location is the secreted. It localises to the nematocyst. Its function is as follows. Sodium channel inhibitor. 5 uM completely inhibits voltage-gated sodium channel (Nav) inactivation. This chain is Delta-actitoxin-Avd2c, found in Anemonia viridis (Snakelocks anemone).